We begin with the raw amino-acid sequence, 399 residues long: Serine/threonine-protein kinase PknL (399 aa).

Topologically, residues 1–368 (MVEAGTRDPL…FIWARQHARR (368 aa)) are cytoplasmic. Residues 19-278 (YLVQAKIASG…IAMGADLEAI (260 aa)) form the Protein kinase domain. ATP is bound by residues 25–33 (IASGGTSTV) and K48. D142 functions as the Proton acceptor in the catalytic mechanism. The interval 312–346 (GQLGAKPVHHPTRQLTRQPGDCSEPASGSEPEHEP) is disordered. The helical transmembrane segment at 369–389 (MVLVWVSVVLAITGLVASAAW) threads the bilayer. The Extracellular portion of the chain corresponds to 390–399 (TIGSNLSGLL).

Belongs to the protein kinase superfamily. Ser/Thr protein kinase family. Post-translationally, autophosphorylated.

It is found in the cell membrane. It catalyses the reaction L-seryl-[protein] + ATP = O-phospho-L-seryl-[protein] + ADP + H(+). The catalysed reaction is L-threonyl-[protein] + ATP = O-phospho-L-threonyl-[protein] + ADP + H(+). The polypeptide is Serine/threonine-protein kinase PknL (pknL) (Mycobacterium bovis (strain ATCC BAA-935 / AF2122/97)).